A 930-amino-acid polypeptide reads, in one-letter code: MSKKRLYEIAKELGKESKEVVARAKELGLDVKSHSSSVEEAVAAKIAASFKPAAAPKVEAKPAAPKVSAEKKTEKSEPAKPAVAKEEAKPAEPVAPKTEKVAAKPQSRNFKAEREARAKEQAERRKQNKGNNRDQQQNGNRQKNDGRNGGKQGQSNRDNRRFNDQAKKQQGQQKRRNERRQQEDKRSNQAAPRIDFKARAAALKAEQNAEYARSSEERFKQYQAAKEALAQANKRKEPEEIFEEAAKLAEQAQQVQAVVEVVPEKKEPAVDTRRKKQARPDKNRDDYDHEEDGPRKQQKNRSSQNQVRNQKNSNWNNNKKNKKGNNKNNRNQTPKPVTERKFHELPTEFEYTDGMTVAEIAKRIKREPAEIVKKLFMMGVMATQNQSLDGETIELLMVDYGIEAKQKVEVDNADIERFFVEDGYLNEDELVERPPVVTIMGHVDHGKTTLLDTLRNSRVATGEAGGITQHIGAYQIVENGKKITFLDTPGHAAFTSMRARGASVTDITILVVAADDGVMPQTIEAINHSKAVNVPIIVAINKIDKPGANPERVIGELAEHGVMSTAWGGDSEFVEISAKFNQNIEELLETVLLVAEIQELKADPTVRAIGTVIEARLDKGKGAVATLLVQQGTLNVQDPIVVGNTFGRVRAMTNDLGRRVKVAGPSTPVSITGLNEAPMAGDHFAVYEDEKSARAAGEERAKRALMKQRQATQRVSLENLFDTLKAGELKSVNVIIKADVQGSVEALSASLQKIDVEGVKVTIVHSAVGAINESDVTLAEASNAFIVGFNVRPTPQARQQAEADDVEIRLHSIIYKVIEEMEEAMKGMLDPEFEEKVIGEAVIRETFKVSKVGTIGGFMVINGKVARDSKVRVIRDGVVIYDGELASLKHYKDDVKEVTNGREGGLMIDGYNDIKMDDVIEAYVMEEIKR.

Residues 50–67 (FKPAAAPKVEAKPAAPKV) show a composition bias toward low complexity. 2 disordered regions span residues 50–195 (FKPA…PRID) and 260–346 (EVVP…HELP). 2 stretches are compositionally biased toward basic and acidic residues: residues 68–90 (SAEK…EAKP) and 110–125 (FKAE…AERR). Over residues 129-141 (KGNNRDQQQNGNR) the composition is skewed to low complexity. Basic and acidic residues-rich tracts occupy residues 157–167 (RDNRRFNDQAK) and 262–295 (VPEK…DGPR). Low complexity predominate over residues 309–318 (NQKNSNWNNN). A compositionally biased stretch (basic and acidic residues) spans 337–346 (VTERKFHELP). One can recognise a tr-type G domain in the interval 432-599 (ERPPVVTIMG…TVLLVAEIQE (168 aa)). A G1 region spans residues 441–448 (GHVDHGKT). 441-448 (GHVDHGKT) is a binding site for GTP. Residues 466-470 (GITQH) are G2. Residues 487 to 490 (DTPG) form a G3 region. GTP contacts are provided by residues 487–491 (DTPGH) and 541–544 (NKID). The tract at residues 541-544 (NKID) is G4. The segment at 577 to 579 (SAK) is G5.

It belongs to the TRAFAC class translation factor GTPase superfamily. Classic translation factor GTPase family. IF-2 subfamily.

Its subcellular location is the cytoplasm. One of the essential components for the initiation of protein synthesis. Protects formylmethionyl-tRNA from spontaneous hydrolysis and promotes its binding to the 30S ribosomal subunits. Also involved in the hydrolysis of GTP during the formation of the 70S ribosomal complex. The chain is Translation initiation factor IF-2 from Streptococcus pneumoniae (strain Hungary19A-6).